We begin with the raw amino-acid sequence, 782 residues long: Translation initiation factor IF-2 (782 aa).

Positions 47–196 (DNAIDGTNKK…TPPKPKELPE (150 aa)) are disordered. Over residues 53 to 65 (TNKKAEAPKKETT) the composition is skewed to basic and acidic residues. The segment covering 66–81 (SNENGNSKGPNKPNMT) has biased composition (polar residues). Over residues 82 to 93 (NSNEKSNKPNKP) the composition is skewed to low complexity. Residues 115–129 (KPANTSNQTQSSGNK) are compositionally biased toward polar residues. The segment covering 133-170 (GGQKRNNNNNSNRPGGGNPNRPGGNNRPNRGGNFNNKG) has biased composition (low complexity). In terms of domain architecture, tr-type G spans 283-452 (ERPPVVTIMG…LLVSEVEELK (170 aa)). A G1 region spans residues 292 to 299 (GHVDHGKT). 292–299 (GHVDHGKT) contacts GTP. Positions 317 to 321 (GITQH) are G2. Residues 338–341 (DTPG) form a G3 region. GTP contacts are provided by residues 338–342 (DTPGH) and 392–395 (NKID). Positions 392–395 (NKID) are G4. Positions 428 to 430 (SAK) are G5.

It belongs to the TRAFAC class translation factor GTPase superfamily. Classic translation factor GTPase family. IF-2 subfamily.

The protein localises to the cytoplasm. In terms of biological role, one of the essential components for the initiation of protein synthesis. Protects formylmethionyl-tRNA from spontaneous hydrolysis and promotes its binding to the 30S ribosomal subunits. Also involved in the hydrolysis of GTP during the formation of the 70S ribosomal complex. The chain is Translation initiation factor IF-2 from Listeria innocua serovar 6a (strain ATCC BAA-680 / CLIP 11262).